The following is a 344-amino-acid chain: Dihydroorotase (344 aa).

Histidine 13 and histidine 15 together coordinate Zn(2+). Residues 15–17 (HLR) and asparagine 41 contribute to the substrate site. Residues lysine 98, histidine 135, and histidine 173 each coordinate Zn(2+). Lysine 98 carries the N6-carboxylysine modification. A substrate-binding site is contributed by histidine 135. Substrate is bound at residue leucine 218. Aspartate 247 is a Zn(2+) binding site. Residue aspartate 247 is part of the active site. Positions 251 and 263 each coordinate substrate.

It belongs to the metallo-dependent hydrolases superfamily. DHOase family. Class II DHOase subfamily. In terms of assembly, homodimer. Zn(2+) serves as cofactor.

It catalyses the reaction (S)-dihydroorotate + H2O = N-carbamoyl-L-aspartate + H(+). Its pathway is pyrimidine metabolism; UMP biosynthesis via de novo pathway; (S)-dihydroorotate from bicarbonate: step 3/3. In terms of biological role, catalyzes the reversible cyclization of carbamoyl aspartate to dihydroorotate. This chain is Dihydroorotase, found in Neisseria meningitidis serogroup C (strain 053442).